Reading from the N-terminus, the 223-residue chain is Ribonuclease DdI (223 aa).

The signal sequence occupies residues 1-25 (MRLIAALLSVLLIASTAQSTVTIYE). Residues Cys46 and Cys51 are joined by a disulfide bond. Residues His63, Glu113, and His117 contribute to the active site. Cys78 and Cys120 are joined by a disulfide. Asn144 carries an N-linked (GlcNAc...) asparagine glycan. Cystine bridges form between Cys183–Cys213 and Cys194–Cys205.

The protein belongs to the RNase T2 family.

It localises to the lysosome. The catalysed reaction is a ribonucleotidyl-ribonucleotide-RNA + H2O = a 3'-end 3'-phospho-ribonucleotide-RNA + a 5'-end dephospho-ribonucleoside-RNA + H(+). Its activity is regulated as follows. Inhibited by Cu(2+) and Zn(2+). In terms of biological role, releases mononucleotides from RNA in the order of 3'-GMP &gt; 3'-UMP &gt; 3'-AMP &gt; 3'-CMP. The chain is Ribonuclease DdI (ddiA) from Dictyostelium discoideum (Social amoeba).